The sequence spans 184 residues: ATP synthase subunit b (184 aa).

The chain crosses the membrane as a helical span at residues 4–24 (LSVLFALVASPALAASGPFFS).

The protein belongs to the ATPase B chain family. F-type ATPases have 2 components, F(1) - the catalytic core - and F(0) - the membrane proton channel. F(1) has five subunits: alpha(3), beta(3), gamma(1), delta(1), epsilon(1). F(0) has three main subunits: a(1), b(2) and c(10-14). The alpha and beta chains form an alternating ring which encloses part of the gamma chain. F(1) is attached to F(0) by a central stalk formed by the gamma and epsilon chains, while a peripheral stalk is formed by the delta and b chains.

The protein resides in the cell inner membrane. Its function is as follows. F(1)F(0) ATP synthase produces ATP from ADP in the presence of a proton or sodium gradient. F-type ATPases consist of two structural domains, F(1) containing the extramembraneous catalytic core and F(0) containing the membrane proton channel, linked together by a central stalk and a peripheral stalk. During catalysis, ATP synthesis in the catalytic domain of F(1) is coupled via a rotary mechanism of the central stalk subunits to proton translocation. Component of the F(0) channel, it forms part of the peripheral stalk, linking F(1) to F(0). The sequence is that of ATP synthase subunit b from Paracoccus denitrificans (strain Pd 1222).